Consider the following 181-residue polypeptide: ATP-dependent protease subunit HslV (181 aa).

Threonine 7 is an active-site residue. Residues alanine 162, cysteine 165, and threonine 168 each coordinate Na(+).

It belongs to the peptidase T1B family. HslV subfamily. As to quaternary structure, a double ring-shaped homohexamer of HslV is capped on each side by a ring-shaped HslU homohexamer. The assembly of the HslU/HslV complex is dependent on binding of ATP.

It is found in the cytoplasm. It catalyses the reaction ATP-dependent cleavage of peptide bonds with broad specificity.. Its activity is regulated as follows. Allosterically activated by HslU binding. Its function is as follows. Protease subunit of a proteasome-like degradation complex believed to be a general protein degrading machinery. The chain is ATP-dependent protease subunit HslV from Coxiella burnetii (strain RSA 493 / Nine Mile phase I).